A 688-amino-acid polypeptide reads, in one-letter code: Glycine--tRNA ligase beta subunit (688 aa).

Belongs to the class-II aminoacyl-tRNA synthetase family. Tetramer of two alpha and two beta subunits.

Its subcellular location is the cytoplasm. The enzyme catalyses tRNA(Gly) + glycine + ATP = glycyl-tRNA(Gly) + AMP + diphosphate. The protein is Glycine--tRNA ligase beta subunit of Aliivibrio fischeri (strain ATCC 700601 / ES114) (Vibrio fischeri).